We begin with the raw amino-acid sequence, 105 residues long: UPF0145 protein Ping_0381 (105 aa).

This sequence belongs to the UPF0145 family.

The sequence is that of UPF0145 protein Ping_0381 from Psychromonas ingrahamii (strain DSM 17664 / CCUG 51855 / 37).